A 360-amino-acid polypeptide reads, in one-letter code: Ankyrin repeat domain-containing protein 2 (360 aa).

Residues 5 to 120 (PSWAGVGALA…GIQNLIELRK (116 aa)) are may mediate interaction with PML, p53/TP53 and YBX1. Ser99 bears the Phosphoserine; by PKB/AKT2 mark. Positions 126–147 (KRDALAASHEPPPEPEEITGPV) are disordered. Acidic residues predominate over residues 138 to 147 (PEPEEITGPV). ANK repeat units lie at residues 147 to 176 (VDEE…SADT), 180 to 209 (FRRT…TVDF), 213 to 242 (LDCT…DTNV), 246 to 275 (LLST…EINA), and 279 to 308 (EGDT…DMMT). Basic and acidic residues predominate over residues 330-342 (ALEHPEPGAEHNG). The tract at residues 330 to 360 (ALEHPEPGAEHNGLEGPNDSGRETPQPVPAQ) is disordered.

Interacts with ID3; both proteins cooperate in myoblast differentiation. Interacts with TTN/titin. Interacts (via ANK repeats) with TCAP; the interaction is direct. Interacts with TJP1 (via PDZ domains). Interacts with PML; the interaction is direct. Interacts with p53/TP53. Interacts with YBX1. Interacts with AKT2. Phosphorylation at Ser-99 by PKB/AKT2 in response to oxidative stress induces translocation to the nucleus and negatively regulates myoblast differentiation. As to expression, mostly expressed in skeletal and cardiac muscles. Found in slow fibers. Also expressed in kidney, but to a lower extent (at protein level).

The protein localises to the cytoplasm. It is found in the myofibril. Its subcellular location is the sarcomere. It localises to the i band. The protein resides in the cytosol. The protein localises to the nucleus. It is found in the PML body. Functions as a negative regulator of myocyte differentiation. May interact with both sarcoplasmic structural proteins and nuclear proteins to regulate gene expression during muscle development and in response to muscle stress. This Homo sapiens (Human) protein is Ankyrin repeat domain-containing protein 2 (ANKRD2).